We begin with the raw amino-acid sequence, 178 residues long: MRMHTRLQFLKRVSNVAYSHGQEQAKKEKVYKEMTQLKSQINRLCRPCPWDWTVFQGNCYFFSKFQQNWNDSVNACRKLDAQLVVIKSDDEQSFLQQTSKEKGYAWMGLSDLKHEGRWHWVDGSHLLFSFMKYWNKGEPNNEWEEDCAEFRGDGWNDAPCTIKKYWICKKSAMSCTEK.

A disulfide bridge links cysteine 48 with cysteine 59. The C-type lectin domain maps to 54–169 (VFQGNCYFFS…CTIKKYWICK (116 aa)). Residue asparagine 70 is glycosylated (N-linked (GlcNAc...) asparagine). 2 disulfide bridges follow: cysteine 76–cysteine 168 and cysteine 147–cysteine 160. Residues glutamate 138, asparagine 140, glutamate 145, asparagine 156, and aspartate 157 each coordinate Ca(2+).

In terms of biological role, probable pathogen-recognition receptor. May recognize in a calcium-dependent manner high mannose N-linked oligosaccharides in a variety of pathogen antigens. In Mus musculus (Mouse), this protein is CD209 antigen-like protein C (Cd209c).